Here is a 135-residue protein sequence, read N- to C-terminus: Ribosome-binding factor A (135 aa).

It belongs to the RbfA family. Monomer. Binds 30S ribosomal subunits, but not 50S ribosomal subunits or 70S ribosomes.

The protein resides in the cytoplasm. Functionally, one of several proteins that assist in the late maturation steps of the functional core of the 30S ribosomal subunit. Associates with free 30S ribosomal subunits (but not with 30S subunits that are part of 70S ribosomes or polysomes). Required for efficient processing of 16S rRNA. May interact with the 5'-terminal helix region of 16S rRNA. This chain is Ribosome-binding factor A, found in Hyphomonas neptunium (strain ATCC 15444).